An 81-amino-acid chain; its full sequence is Large ribosomal subunit protein bL31B (81 aa).

It belongs to the bacterial ribosomal protein bL31 family. Type B subfamily. In terms of assembly, part of the 50S ribosomal subunit.

In Cutibacterium acnes (strain DSM 16379 / KPA171202) (Propionibacterium acnes), this protein is Large ribosomal subunit protein bL31B.